A 510-amino-acid chain; its full sequence is NAD(P)H-quinone oxidoreductase subunit 2 A, chloroplastic (510 aa).

13 helical membrane-spanning segments follow: residues 24–44, 57–77, 99–119, 124–144, 149–169, 183–203, 227–247, 295–315, 323–343, 354–374, 395–415, 418–438, and 484–504; these read LLLF…GLIL, IPWL…ALLF, IFQF…VEYI, MAIT…MFLC, LITI…LSGY, YLLM…WLYG, PGIS…LSPA, WHLL…LIAI, MLAY…IVGD, YMLF…LFGL, ALSL…AGFF, LYLF…IGLL, and MIVC…IIAI.

This sequence belongs to the complex I subunit 2 family. As to quaternary structure, NDH is composed of at least 16 different subunits, 5 of which are encoded in the nucleus.

The protein localises to the plastid. It is found in the chloroplast thylakoid membrane. The enzyme catalyses a plastoquinone + NADH + (n+1) H(+)(in) = a plastoquinol + NAD(+) + n H(+)(out). It carries out the reaction a plastoquinone + NADPH + (n+1) H(+)(in) = a plastoquinol + NADP(+) + n H(+)(out). Functionally, NDH shuttles electrons from NAD(P)H:plastoquinone, via FMN and iron-sulfur (Fe-S) centers, to quinones in the photosynthetic chain and possibly in a chloroplast respiratory chain. The immediate electron acceptor for the enzyme in this species is believed to be plastoquinone. Couples the redox reaction to proton translocation, and thus conserves the redox energy in a proton gradient. The protein is NAD(P)H-quinone oxidoreductase subunit 2 A, chloroplastic of Solanum tuberosum (Potato).